An 861-amino-acid polypeptide reads, in one-letter code: ToMV resistance protein Tm-2(GCR236) (861 aa).

Positions 63 to 83 (VKNLLKDIQELAGDVEDLLDD) form a coiled coil. In terms of domain architecture, NB-ARC spans 162-388 (DDFNMLQAKL…LESMGHKVQD (227 aa)). 185–192 (GMPGLGKT) provides a ligand contact to ATP. LRR repeat units follow at residues 225–248 (LDIA…NLRS), 305–327 (LHAL…IFNF), 388–411 (DGCA…CFLY), 449–472 (LAED…TYNG), 510–536 (VARL…KLEK), 585–608 (MTCL…IVKL), 609–631 (TRLE…VWES), 652–680 (ISSF…FFEP), 689–710 (LRKL…IFSP), 712–735 (LKAL…LSSY), 736–758 (PHIA…SFPP), 784–810 (LRKL…GYSF), and 811–835 (PQLE…DVSM).

It belongs to the disease resistance NB-LRR family. (Microbial infection) Interacts with tobamoviruses mouvement protein at the plasma membrane; this interaction triggers defense responses leading to programmed cell death. As to quaternary structure, binds to HSP90 proteins; this interaction seems required for defense responses toward tobamoviruses.

The protein localises to the cell membrane. Functionally, inhibitor of viral mouvements which confers resistance to some tobamoviruses including tomato mosaic virus (ToMV) (e.g. isolates L, W3 and SL-1) and tobacco mosaic virus (TMV), but not to resistance-breaking isolates (e.g. B7, LT1, LII, Ltbl, ToMV2, and ToMV1-2) ToMV and tomato brown rugose fruit virus (ToBRFV). Elicits a hypersensitive reaction in response to avirulent (Avr) movement proteins from resistance inducing tobamoviruses (e.g. ToMV and TMV) strains, thus leading to programmed cell death. The sequence is that of ToMV resistance protein Tm-2(GCR236) from Solanum lycopersicum (Tomato).